A 398-amino-acid chain; its full sequence is Acetate kinase 2 (398 aa).

N7 serves as a coordination point for Mg(2+). K14 is a binding site for ATP. R91 provides a ligand contact to substrate. D148 functions as the Proton donor/acceptor in the catalytic mechanism. ATP is bound by residues 208–212, 283–285, and 331–335; these read HLGNG, DFR, and GVGEN. Position 384 (E384) interacts with Mg(2+).

Belongs to the acetokinase family. In terms of assembly, homodimer. Requires Mg(2+) as cofactor. The cofactor is Mn(2+).

The protein localises to the cytoplasm. The catalysed reaction is acetate + ATP = acetyl phosphate + ADP. It functions in the pathway metabolic intermediate biosynthesis; acetyl-CoA biosynthesis; acetyl-CoA from acetate: step 1/2. Catalyzes the formation of acetyl phosphate from acetate and ATP. Can also catalyze the reverse reaction. The chain is Acetate kinase 2 from Clostridium perfringens (strain 13 / Type A).